Reading from the N-terminus, the 257-residue chain is Acetylglutamate kinase (257 aa).

Substrate contacts are provided by residues 43 to 44, Arg-65, and Asn-157; that span reads GG. ATP-binding positions include 180–185 and 208–210; these read DVSGIL and IIT.

This sequence belongs to the acetylglutamate kinase family. ArgB subfamily. As to quaternary structure, homodimer.

The protein localises to the cytoplasm. It carries out the reaction N-acetyl-L-glutamate + ATP = N-acetyl-L-glutamyl 5-phosphate + ADP. The protein operates within amino-acid biosynthesis; L-arginine biosynthesis; N(2)-acetyl-L-ornithine from L-glutamate: step 2/4. Functionally, catalyzes the ATP-dependent phosphorylation of N-acetyl-L-glutamate. The polypeptide is Acetylglutamate kinase (Edwardsiella ictaluri (strain 93-146)).